A 294-amino-acid polypeptide reads, in one-letter code: Putative immediate early glycoprotein (294 aa).

The first 21 residues, 1–21 (MKKLTMESLLVYTFVMGVCFT), serve as a signal peptide directing secretion. Residues 262–282 (LFFLAGGAFTMLLLLCCLSMI) form a helical membrane-spanning segment.

This sequence belongs to the herpesviridae immediate early glycoprotein family.

The protein localises to the host membrane. The chain is Putative immediate early glycoprotein (U18) from Homo sapiens (Human).